Here is a 212-residue protein sequence, read N- to C-terminus: NADH dehydrogenase [ubiquinone] iron-sulfur protein 8, mitochondrial (212 aa).

A mitochondrion-targeting transit peptide spans 1 to 36 (MRCLTMPMLLRALAQAQAARAGHASVRGLHSSAVAA). 4Fe-4S ferredoxin-type domains are found at residues 104–133 (RRYP…IEAE) and 143–172 (TRYD…EGPN). Positions 113, 116, 119, 123, 152, 155, 158, and 162 each coordinate [4Fe-4S] cluster.

Belongs to the complex I 23 kDa subunit family. Core subunit of respiratory chain NADH dehydrogenase (Complex I) which is composed of 45 different subunits. This is a component of the iron-sulfur (IP) fragment of the enzyme. Interacts with RAB5IF. It depends on [4Fe-4S] cluster as a cofactor.

The protein resides in the mitochondrion inner membrane. It carries out the reaction a ubiquinone + NADH + 5 H(+)(in) = a ubiquinol + NAD(+) + 4 H(+)(out). Its function is as follows. Core subunit of the mitochondrial membrane respiratory chain NADH dehydrogenase (Complex I) which catalyzes electron transfer from NADH through the respiratory chain, using ubiquinone as an electron acceptor. Essential for the catalytic activity and assembly of complex I. This chain is NADH dehydrogenase [ubiquinone] iron-sulfur protein 8, mitochondrial (NDUFS8), found in Bos taurus (Bovine).